Here is a 965-residue protein sequence, read N- to C-terminus: Phosphoenolpyruvate carboxylase 1 (965 aa).

Serine 11 is modified (phosphoserine). Residue histidine 172 is part of the active site. Positions 283, 450, and 597 each coordinate D-glucose 6-phosphate. The active site involves lysine 600. D-glucose 6-phosphate is bound at residue arginine 635. Arginine 641 is an active-site residue. Arginine 641 contributes to the L-aspartate binding site. Position 665 (threonine 665) interacts with D-glucose 6-phosphate. Position 673 (glutamine 673) interacts with L-aspartate. Residues arginine 753 and 767–769 (RAI) each bind D-glucose 6-phosphate. Lysine 829, arginine 888, and asparagine 963 together coordinate L-aspartate.

The protein belongs to the PEPCase type 1 family. In terms of assembly, homotetramer. Mg(2+) is required as a cofactor. In terms of tissue distribution, expressed in roots and stems and at low levels in leaves. Preferentially expressed in the phloem and in root tips.

It is found in the cytoplasm. The enzyme catalyses oxaloacetate + phosphate = phosphoenolpyruvate + hydrogencarbonate. Activated by the allosteric regulator glucose-6-phosphate. Inhibited by malate and aspartate. Up regulated by light-reversible phosphorylation. Functionally, through the carboxylation of phosphoenolpyruvate (PEP) it forms oxaloacetate, a four-carbon dicarboxylic acid source for the tricarboxylic acid cycle. May be involved in phloem loading with sucrose and in anions and cations uptake and amino acid biosynthesis in roots. The sequence is that of Phosphoenolpyruvate carboxylase 1 from Flaveria trinervia (Clustered yellowtops).